Reading from the N-terminus, the 343-residue chain is ABC transporter riboflavin-binding protein RfuA (343 aa).

The N-terminal stretch at 1–19 is a signal peptide; that stretch reads MNGAVCVLSALIAVFTCFS. A lipid anchor (N-palmitoyl cysteine) is attached at Cys20. Residue Cys20 is the site of S-diacylglycerol cysteine attachment. Riboflavin is bound by residues 43–46, Asp124, Gln140, Tyr176, Trp208, and Asp255; that span reads SPVY.

This sequence belongs to the BMP lipoprotein family. In terms of assembly, monomer in solution. The complex is probably composed of two ATP-binding proteins (RfuB), two transmembrane proteins (RfuC and RfuD) and a solute-binding protein (RfuA).

The protein localises to the cell inner membrane. Its function is as follows. Probably part of the ABC transporter complex RfuABCD involved in riboflavin import. Binds riboflavin. This chain is ABC transporter riboflavin-binding protein RfuA, found in Treponema pallidum (strain Nichols).